The following is a 344-amino-acid chain: Methionine import ATP-binding protein MetN (344 aa).

An ABC transporter domain is found at Ile-2–Ile-241. Gly-38–Ser-45 contributes to the ATP binding site.

The protein belongs to the ABC transporter superfamily. Methionine importer (TC 3.A.1.24) family. The complex is composed of two ATP-binding proteins (MetN), two transmembrane proteins (MetI) and a solute-binding protein (MetQ).

It localises to the cell inner membrane. The enzyme catalyses L-methionine(out) + ATP + H2O = L-methionine(in) + ADP + phosphate + H(+). It catalyses the reaction D-methionine(out) + ATP + H2O = D-methionine(in) + ADP + phosphate + H(+). Functionally, part of the ABC transporter complex MetNIQ involved in methionine import. Responsible for energy coupling to the transport system. In Burkholderia thailandensis (strain ATCC 700388 / DSM 13276 / CCUG 48851 / CIP 106301 / E264), this protein is Methionine import ATP-binding protein MetN.